The sequence spans 68 residues: Guanine nucleotide-binding protein G(I)/G(S)/G(O) subunit gamma-5 (68 aa).

Serine 2 carries the post-translational modification N-acetylserine. A Phosphoserine modification is found at serine 2. Cysteine methyl ester is present on cysteine 65. A lipid anchor (S-geranylgeranyl cysteine) is attached at cysteine 65. A propeptide spans 66 to 68 (SFL) (removed in mature form).

Belongs to the G protein gamma family. As to quaternary structure, g proteins are composed of 3 units, alpha, beta and gamma. Expressed in a variety of tissues.

It is found in the cell membrane. Its function is as follows. Guanine nucleotide-binding proteins (G proteins) are involved as a modulator or transducer in various transmembrane signaling systems. The beta and gamma chains are required for the GTPase activity, for replacement of GDP by GTP, and for G protein-effector interaction. This chain is Guanine nucleotide-binding protein G(I)/G(S)/G(O) subunit gamma-5 (GNG5), found in Bos taurus (Bovine).